Reading from the N-terminus, the 446-residue chain is ATP-dependent RNA helicase SUB2 (446 aa).

An N-acetylserine modification is found at Ser2. Residues Ser13 and Ser37 each carry the phosphoserine modification. Low complexity predominate over residues 23 to 41; the sequence is ASKAAEAGETGAATSATEG. The segment at 23-52 is disordered; that stretch reads ASKAAEAGETGAATSATEGDNNNNTAAGDK. Residues 62-90 carry the Q motif motif; sequence TGFKDFLLKPELSRAIIDCGFEHPSEVQQ. Residues 93-268 form the Helicase ATP-binding domain; it reads IPQSIHGTDV…RRFLQNPLEI (176 aa). Residue 106–113 coordinates ATP; it reads AKSGLGKT. Thr169 carries the phosphothreonine modification. Residues 215-218 carry the DECD box motif; sequence DECD. The 162-residue stretch at 280–441 folds into the Helicase C-terminal domain; sequence GLQQYYIKLE…EFPEEGIDPS (162 aa).

The protein belongs to the DEAD box helicase family. DECD subfamily. Component of the TREX complex composed of at least SUB2, TEX1, YRA1 and the four THO complex components: HPR1, MFT1, THO2 and THP1. Interacts with HPR1, YRA1, and YRA2. SUB2 may mediate the interaction between the THO complex and YRA1. Associates with growing mRNP complexes during transcription. This association requires the presence of HPR1. Also interacts with SAC3. Interacts with THO1 in the presence of RNA; this interaction facilitates RNA binding of SUB2.

It localises to the nucleus. The catalysed reaction is ATP + H2O = ADP + phosphate + H(+). ATP-binding RNA helicase component of the TREX complex involved in transcription elongation and required for the export of mRNA out of the nucleus. SUB2 also plays a role in pre-mRNA splicing and spliceosome assembly. May be involved in rDNA and telomeric silencing, and maintenance of genome integrity. Associates with THO1, which facilitates RNA binding of SUB2 and likely plays a role in mRNA export. The polypeptide is ATP-dependent RNA helicase SUB2 (SUB2) (Saccharomyces cerevisiae (strain ATCC 204508 / S288c) (Baker's yeast)).